A 1432-amino-acid polypeptide reads, in one-letter code: Gag-Pol polyprotein (1432 aa).

The N-myristoyl glycine; by host moiety is linked to residue Gly-2. The interaction with Gp41 stretch occupies residues 7 to 31; sequence VLSGGKLDTWERIRLRPGGKKKYAL. Positions 8–43 are interaction with host CALM1; sequence LSGGKLDTWERIRLRPGGKKKYALKHLIWASRELER. The interval 12–19 is interaction with host AP3D1; the sequence is KLDTWERI. Positions 14–33 are interaction with membrane phosphatidylinositol 4,5-bisphosphate and RNA; that stretch reads DTWERIRLRPGGKKKYALKH. A Nuclear export signal motif is present at residues 16 to 22; that stretch reads WERIRLR. A Nuclear localization signal motif is present at residues 26–32; that stretch reads KKKYALK. Residues 73 to 77 form an interaction with membrane phosphatidylinositol 4,5-bisphosphate region; that stretch reads EEIRS. A disordered region spans residues 102-125; it reads EKMEEEQNKSKKKTQQAAADSSQV. Over residues 116-125 the composition is skewed to low complexity; sequence QQAAADSSQV. Tyr-129 carries the phosphotyrosine; by host modification. Residues 186–224 form an interaction with human PPIA/CYPA and NUP153 region; it reads NTVGGHQAAMQMLKETINDEAAEWDRLHPVHAGPVAPGQ. The interval 274 to 360 is dimerization/Multimerization of capsid protein p24; the sequence is YSPVSILDIR…GGPGHKARVL (87 aa). 2 CCHC-type zinc fingers span residues 388–405 and 409–426; these read IKCFNCGKEGHTAKNCRA and KGCWKCGREGHQMKDCTE. Residues 486-490 form a dimerization of protease region; sequence PQITL. The region spanning 505–574 is the Peptidase A2 domain; it reads KEALLDTGAD…TPVNIIGRNL (70 aa). Catalysis depends on Asp-510, which acts as the For protease activity; shared with dimeric partner. Dimerization of protease stretches follow at residues 534 to 540 and 573 to 585; these read GIGGFIK and NLLTQIGCTLNFP. The Reverse transcriptase domain maps to 628–818; sequence EGKISRIGPE…PPFLWMGYEL (191 aa). Mg(2+) is bound by residues Asp-694, Asp-769, and Asp-770. The segment at 811-819 is RT 'primer grip'; sequence FLWMGYELH. Positions 982–998 match the Tryptophan repeat motif motif; the sequence is WETWWIEYWQATWIPEW. The RNase H type-1 domain occupies 1018 to 1141; the sequence is IIGAETFYVD…VDKLVSQGIR (124 aa). Residues Asp-1027, Glu-1062, Asp-1082, and Asp-1133 each coordinate Mg(2+). The Integrase-type zinc-finger motif lies at 1147–1188; sequence DGIDKAQEEHEKYHNNWRAMASDFNLPPVVAKEIVASCDKCQ. The Zn(2+) site is built by His-1156, His-1160, Cys-1184, and Cys-1187. The region spanning 1198-1348 is the Integrase catalytic domain; that stretch reads VDCSPGIWQL…SAGERIIDII (151 aa). Mg(2+) is bound by residues Asp-1208, Asp-1260, and Glu-1296. Positions 1367-1414 form a DNA-binding region, integrase-type; that stretch reads FRVYYRDSRDPIWKGPAKLLWKGEGAVVIQDNSDIKVVPRRKVKIIRD.

In terms of assembly, homotrimer; further assembles as hexamers of trimers. Interacts with gp41 (via C-terminus). Interacts with host CALM1; this interaction induces a conformational change in the Matrix protein, triggering exposure of the myristate group. Interacts with host AP3D1; this interaction allows the polyprotein trafficking to multivesicular bodies during virus assembly. Part of the pre-integration complex (PIC) which is composed of viral genome, matrix protein, Vpr and integrase. As to quaternary structure, homodimer; the homodimer further multimerizes as homohexamers or homopentamers. Interacts with human PPIA/CYPA; This interaction stabilizes the capsid. Interacts with human NUP153. Interacts with host PDZD8; this interaction stabilizes the capsid. Interacts with monkey TRIM5; this interaction destabilizes the capsid. Homodimer, whose active site consists of two apposed aspartic acid residues. In terms of assembly, heterodimer of p66 RT and p51 RT (RT p66/p51). Heterodimerization of RT is essential for DNA polymerase activity. The overall folding of the subdomains is similar in p66 RT and p51 RT but the spatial arrangements of the subdomains are dramatically different. As to quaternary structure, homotetramer; may further associate as a homohexadecamer. Part of the pre-integration complex (PIC) which is composed of viral genome, matrix protein, Vpr and integrase. Interacts with human SMARCB1/INI1 and human PSIP1/LEDGF isoform 1. Interacts with human KPNA3; this interaction might play a role in nuclear import of the pre-integration complex. Interacts with human NUP153; this interaction might play a role in nuclear import of the pre-integration complex. It depends on Mg(2+) as a cofactor. Specific enzymatic cleavages by the viral protease yield mature proteins. The protease is released by autocatalytic cleavage. The polyprotein is cleaved during and after budding, this process is termed maturation. Proteolytic cleavage of p66 RT removes the RNase H domain to yield the p51 RT subunit. Nucleocapsid protein p7 might be further cleaved after virus entry. In terms of processing, tyrosine phosphorylated presumably in the virion by a host kinase. Phosphorylation is apparently not a major regulator of membrane association. Post-translationally, phosphorylated possibly by host MAPK1; this phosphorylation is necessary for Pin1-mediated virion uncoating. Methylated by host PRMT6, impairing its function by reducing RNA annealing and the initiation of reverse transcription.

It is found in the host cell membrane. The protein localises to the host endosome. The protein resides in the host multivesicular body. Its subcellular location is the virion membrane. It localises to the host nucleus. It is found in the host cytoplasm. The protein localises to the virion. The catalysed reaction is Specific for a P1 residue that is hydrophobic, and P1' variable, but often Pro.. It catalyses the reaction Endohydrolysis of RNA in RNA/DNA hybrids. Three different cleavage modes: 1. sequence-specific internal cleavage of RNA. Human immunodeficiency virus type 1 and Moloney murine leukemia virus enzymes prefer to cleave the RNA strand one nucleotide away from the RNA-DNA junction. 2. RNA 5'-end directed cleavage 13-19 nucleotides from the RNA end. 3. DNA 3'-end directed cleavage 15-20 nucleotides away from the primer terminus.. The enzyme catalyses 3'-end directed exonucleolytic cleavage of viral RNA-DNA hybrid.. It carries out the reaction DNA(n) + a 2'-deoxyribonucleoside 5'-triphosphate = DNA(n+1) + diphosphate. The viral protease is inhibited by many synthetic protease inhibitors (PIs), such as amprenavir, atazanavir, indinavir, loprinavir, nelfinavir, ritonavir and saquinavir. RT can be inhibited either by nucleoside RT inhibitors (NRTIs) or by non nucleoside RT inhibitors (NNRTIs). NRTIs act as chain terminators, whereas NNRTIs inhibit DNA polymerization by binding a small hydrophobic pocket near the RT active site and inducing an allosteric change in this region. Classical NRTIs are abacavir, adefovir (PMEA), didanosine (ddI), lamivudine (3TC), stavudine (d4T), tenofovir (PMPA), zalcitabine (ddC), and zidovudine (AZT). Classical NNRTIs are atevirdine (BHAP U-87201E), delavirdine, efavirenz (DMP-266), emivirine (I-EBU), and nevirapine (BI-RG-587). The tritherapies used as a basic effective treatment of AIDS associate two NRTIs and one NNRTI. Use of protease inhibitors in tritherapy regimens permit more ambitious therapeutic strategies. Gag-Pol polyprotein and Gag polyprotein may regulate their own translation, by the binding genomic RNA in the 5'-UTR. At low concentration, Gag-Pol and Gag would promote translation, whereas at high concentration, the polyproteins encapsidate genomic RNA and then shut off translation. In terms of biological role, matrix protein p17 targets Gag and Gag-pol polyproteins to the plasma membrane via a multipartite membrane-binding signal, that includes its myristoylated N-terminus. Matrix protein is part of the pre-integration complex. Implicated in the release from host cell mediated by Vpu. Binds to RNA. Its function is as follows. Forms the conical core that encapsulates the genomic RNA-nucleocapsid complex in the virion. Most core are conical, with only 7% tubular. The core is constituted by capsid protein hexamer subunits. The core is disassembled soon after virion entry. Host restriction factors such as TRIM5-alpha or TRIMCyp bind retroviral capsids and cause premature capsid disassembly, leading to blocks in reverse transcription. Capsid restriction by TRIM5 is one of the factors which restricts HIV-1 to the human species. Host PIN1 apparently facilitates the virion uncoating. On the other hand, interactions with PDZD8 or CYPA stabilize the capsid. Functionally, nucleocapsid protein p7 encapsulates and protects viral dimeric unspliced genomic RNA (gRNA). Binds these RNAs through its zinc fingers. Acts as a nucleic acid chaperone which is involved in rearangement of nucleic acid secondary structure during gRNA retrotranscription. Also facilitates template switch leading to recombination. As part of the polyprotein, participates in gRNA dimerization, packaging, tRNA incorporation and virion assembly. The aspartyl protease mediates proteolytic cleavages of Gag and Gag-Pol polyproteins during or shortly after the release of the virion from the plasma membrane. Cleavages take place as an ordered, step-wise cascade to yield mature proteins. This process is called maturation. Displays maximal activity during the budding process just prior to particle release from the cell. Also cleaves Nef and Vif, probably concomitantly with viral structural proteins on maturation of virus particles. Hydrolyzes host EIF4GI and PABP1 in order to shut off the capped cellular mRNA translation. The resulting inhibition of cellular protein synthesis serves to ensure maximal viral gene expression and to evade host immune response. Also mediates cleavage of host YTHDF3. Mediates cleavage of host CARD8, thereby activating the CARD8 inflammasome, leading to the clearance of latent HIV-1 in patient CD4(+) T-cells after viral reactivation; in contrast, HIV-1 can evade CARD8-sensing when its protease remains inactive in infected cells prior to viral budding. In terms of biological role, reverse transcriptase/ribonuclease H (RT) is a multifunctional enzyme that converts the viral RNA genome into dsDNA in the cytoplasm, shortly after virus entry into the cell. This enzyme displays a DNA polymerase activity that can copy either DNA or RNA templates, and a ribonuclease H (RNase H) activity that cleaves the RNA strand of RNA-DNA heteroduplexes in a partially processive 3' to 5' endonucleasic mode. Conversion of viral genomic RNA into dsDNA requires many steps. A tRNA(3)-Lys binds to the primer-binding site (PBS) situated at the 5'-end of the viral RNA. RT uses the 3' end of the tRNA primer to perform a short round of RNA-dependent minus-strand DNA synthesis. The reading proceeds through the U5 region and ends after the repeated (R) region which is present at both ends of viral RNA. The portion of the RNA-DNA heteroduplex is digested by the RNase H, resulting in a ssDNA product attached to the tRNA primer. This ssDNA/tRNA hybridizes with the identical R region situated at the 3' end of viral RNA. This template exchange, known as minus-strand DNA strong stop transfer, can be either intra- or intermolecular. RT uses the 3' end of this newly synthesized short ssDNA to perform the RNA-dependent minus-strand DNA synthesis of the whole template. RNase H digests the RNA template except for two polypurine tracts (PPTs) situated at the 5'-end and near the center of the genome. It is not clear if both polymerase and RNase H activities are simultaneous. RNase H probably can proceed both in a polymerase-dependent (RNA cut into small fragments by the same RT performing DNA synthesis) and a polymerase-independent mode (cleavage of remaining RNA fragments by free RTs). Secondly, RT performs DNA-directed plus-strand DNA synthesis using the PPTs that have not been removed by RNase H as primers. PPTs and tRNA primers are then removed by RNase H. The 3' and 5' ssDNA PBS regions hybridize to form a circular dsDNA intermediate. Strand displacement synthesis by RT to the PBS and PPT ends produces a blunt ended, linear dsDNA copy of the viral genome that includes long terminal repeats (LTRs) at both ends. Its function is as follows. Catalyzes viral DNA integration into the host chromosome, by performing a series of DNA cutting and joining reactions. This enzyme activity takes place after virion entry into a cell and reverse transcription of the RNA genome in dsDNA. The first step in the integration process is 3' processing. This step requires a complex comprising the viral genome, matrix protein, Vpr and integrase. This complex is called the pre-integration complex (PIC). The integrase protein removes 2 nucleotides from each 3' end of the viral DNA, leaving recessed CA OH's at the 3' ends. In the second step, the PIC enters cell nucleus. This process is mediated through integrase and Vpr proteins, and allows the virus to infect a non dividing cell. This ability to enter the nucleus is specific of lentiviruses, other retroviruses cannot and rely on cell division to access cell chromosomes. In the third step, termed strand transfer, the integrase protein joins the previously processed 3' ends to the 5' ends of strands of target cellular DNA at the site of integration. The 5'-ends are produced by integrase-catalyzed staggered cuts, 5 bp apart. A Y-shaped, gapped, recombination intermediate results, with the 5'-ends of the viral DNA strands and the 3' ends of target DNA strands remaining unjoined, flanking a gap of 5 bp. The last step is viral DNA integration into host chromosome. This involves host DNA repair synthesis in which the 5 bp gaps between the unjoined strands are filled in and then ligated. Since this process occurs at both cuts flanking the HIV genome, a 5 bp duplication of host DNA is produced at the ends of HIV-1 integration. Alternatively, Integrase may catalyze the excision of viral DNA just after strand transfer, this is termed disintegration. This chain is Gag-Pol polyprotein (gag-pol), found in Homo sapiens (Human).